Consider the following 542-residue polypeptide: Chaperonin GroEL (542 aa).

ATP is bound by residues 29–32 (TMGP), 86–90 (DGTTT), G413, 476–478 (NAA), and D492. Residues 521–542 (KPDPNANNQAPAAPQGGMGGMM) are disordered. The span at 524–535 (PNANNQAPAAPQ) shows a compositional bias: low complexity.

This sequence belongs to the chaperonin (HSP60) family. As to quaternary structure, forms a cylinder of 14 subunits composed of two heptameric rings stacked back-to-back. Interacts with the co-chaperonin GroES.

The protein resides in the cytoplasm. It carries out the reaction ATP + H2O + a folded polypeptide = ADP + phosphate + an unfolded polypeptide.. Its function is as follows. Together with its co-chaperonin GroES, plays an essential role in assisting protein folding. The GroEL-GroES system forms a nano-cage that allows encapsulation of the non-native substrate proteins and provides a physical environment optimized to promote and accelerate protein folding. In Limosilactobacillus reuteri subsp. reuteri (strain JCM 1112) (Lactobacillus reuteri), this protein is Chaperonin GroEL.